Consider the following 518-residue polypeptide: Mitochondrial distribution and morphology protein 34 (518 aa).

In terms of domain architecture, SMP-LTD spans Met-1–Leu-198. Disordered stretches follow at residues Ser-335–Ser-369 and Ile-491–Val-518. Over residues Arg-336 to Ser-350 the composition is skewed to basic residues. A compositionally biased stretch (basic and acidic residues) spans Pro-492–Thr-506.

It belongs to the MDM34 family. As to quaternary structure, component of the ER-mitochondria encounter structure (ERMES) or MDM complex, composed of MMM1, MDM10, MDM12 and MDM34.

Its subcellular location is the mitochondrion outer membrane. Functionally, component of the ERMES/MDM complex, which serves as a molecular tether to connect the endoplasmic reticulum (ER) and mitochondria. Components of this complex are involved in the control of mitochondrial shape and protein biogenesis, and function in nonvesicular lipid trafficking between the ER and mitochondria. MDM34 is required for the interaction of the ER-resident membrane protein MMM1 and the outer mitochondrial membrane-resident beta-barrel protein MDM10. The protein is Mitochondrial distribution and morphology protein 34 of Meyerozyma guilliermondii (strain ATCC 6260 / CBS 566 / DSM 6381 / JCM 1539 / NBRC 10279 / NRRL Y-324) (Yeast).